The sequence spans 372 residues: MHIESPIKRRQSTRIYVGNVPIGDGAPIAVQSMTNTRTTDVDATVAQIKSLEKVGADIVRVSVPTMDAAEAFKVIKQQVSVPLVADIHFDYRIALQVAEYGVDCLRINPGNIGNEQRIRSVVDCARDKNIPIRIGVNGGSLEKDIQAKYKEPTAEALLESAMRHVDILDRLNFDQFKVSVKASDVFLAVDSYRLLAKQIAQPLHLGITEAGGARAGSVKSAVGLGMLLSEGIGDTLRISLAADPVEEIKVGFDILKSLRIRSRGINFIACPTCSRQEFDVIATVNELEQRLEDLITPMDVSLIGCVVNGPGEAEVSHMGIAGSNRKSAFYEDGVRQKERFDNDNIVDQLEAKIRAKAATLSKENQIDINQID.

The [4Fe-4S] cluster site is built by Cys270, Cys273, Cys305, and Glu312.

It belongs to the IspG family. [4Fe-4S] cluster serves as cofactor.

The enzyme catalyses (2E)-4-hydroxy-3-methylbut-2-enyl diphosphate + oxidized [flavodoxin] + H2O + 2 H(+) = 2-C-methyl-D-erythritol 2,4-cyclic diphosphate + reduced [flavodoxin]. It functions in the pathway isoprenoid biosynthesis; isopentenyl diphosphate biosynthesis via DXP pathway; isopentenyl diphosphate from 1-deoxy-D-xylulose 5-phosphate: step 5/6. In terms of biological role, converts 2C-methyl-D-erythritol 2,4-cyclodiphosphate (ME-2,4cPP) into 1-hydroxy-2-methyl-2-(E)-butenyl 4-diphosphate. The chain is 4-hydroxy-3-methylbut-2-en-1-yl diphosphate synthase (flavodoxin) from Aliivibrio fischeri (strain ATCC 700601 / ES114) (Vibrio fischeri).